A 336-amino-acid polypeptide reads, in one-letter code: Probable allantoicase (336 aa).

Belongs to the allantoicase family.

It catalyses the reaction allantoate + H2O = (S)-ureidoglycolate + urea. It functions in the pathway nitrogen metabolism; (S)-allantoin degradation; (S)-ureidoglycolate from allantoate (aminidohydrolase route): step 1/1. The protein is Probable allantoicase of Acinetobacter baumannii (strain ACICU).